A 377-amino-acid chain; its full sequence is Anhydro-N-acetylmuramic acid kinase (377 aa).

12–19 (GTSLDGID) provides a ligand contact to ATP.

The protein belongs to the anhydro-N-acetylmuramic acid kinase family.

The enzyme catalyses 1,6-anhydro-N-acetyl-beta-muramate + ATP + H2O = N-acetyl-D-muramate 6-phosphate + ADP + H(+). It participates in amino-sugar metabolism; 1,6-anhydro-N-acetylmuramate degradation. It functions in the pathway cell wall biogenesis; peptidoglycan recycling. Its function is as follows. Catalyzes the specific phosphorylation of 1,6-anhydro-N-acetylmuramic acid (anhMurNAc) with the simultaneous cleavage of the 1,6-anhydro ring, generating MurNAc-6-P. Is required for the utilization of anhMurNAc either imported from the medium or derived from its own cell wall murein, and thus plays a role in cell wall recycling. This chain is Anhydro-N-acetylmuramic acid kinase, found in Methylorubrum populi (strain ATCC BAA-705 / NCIMB 13946 / BJ001) (Methylobacterium populi).